We begin with the raw amino-acid sequence, 226 residues long: Triosephosphate isomerase (226 aa).

Position 10 to 12 (10 to 12 (NFK)) interacts with substrate. Residue H96 is the Electrophile of the active site. E144 (proton acceptor) is an active-site residue. Residues I149, G184, and 205–206 (AS) each bind substrate.

The protein belongs to the triosephosphate isomerase family. In terms of assembly, homotetramer; dimer of dimers.

Its subcellular location is the cytoplasm. It carries out the reaction D-glyceraldehyde 3-phosphate = dihydroxyacetone phosphate. It participates in carbohydrate biosynthesis; gluconeogenesis. The protein operates within carbohydrate degradation; glycolysis; D-glyceraldehyde 3-phosphate from glycerone phosphate: step 1/1. Its function is as follows. Involved in the gluconeogenesis. Catalyzes stereospecifically the conversion of dihydroxyacetone phosphate (DHAP) to D-glyceraldehyde-3-phosphate (G3P). This is Triosephosphate isomerase from Methanopyrus kandleri (strain AV19 / DSM 6324 / JCM 9639 / NBRC 100938).